Reading from the N-terminus, the 349-residue chain is Quinone oxidoreductase-like protein 2 (349 aa).

Lys-35 carries the N6-acetyllysine modification. N6-succinyllysine is present on Lys-200.

It belongs to the zinc-containing alcohol dehydrogenase family. Quinone oxidoreductase subfamily.

This Bos taurus (Bovine) protein is Quinone oxidoreductase-like protein 2.